Reading from the N-terminus, the 105-residue chain is Protein Rev (105 aa).

The residue at position 5 (S5) is a Phosphoserine; by host CK2. The segment at 18–26 (IIKILYQSN) is homomultimerization. Residues 24-35 (QSNPYPDSSQGT) are compositionally biased toward polar residues. 2 disordered regions span residues 24-49 (QSNP…WRAR) and 65-105 (LGGP…ATTE). Positions 35 to 51 (TRQARRNRRRRWRARQR) match the Nuclear localization signal and RNA-binding (RRE) motif. Basic residues predominate over residues 37–49 (QARRNRRRRWRAR). The short motif at 74-85 (LPLPPLGRLTLD) is the Nuclear export signal and binding to XPO1 element. Residues 95–105 (TESQQGTATTE) are compositionally biased toward polar residues.

It belongs to the HIV-1 REV protein family. As to quaternary structure, homomultimer; when bound to the RRE. Multimeric assembly is essential for activity and may involve XPO1. Binds to human KPNB1, XPO1, TNPO1, RANBP5 and IPO7. Interacts with the viral Integrase. Interacts with human KHDRBS1. Interacts with human NAP1; this interaction decreases Rev multimerization and stimulates its activity. Interacts with human DEAD-box helicases DDX3 and DDX24; these interactions may serve for viral RNA export to the cytoplasm and packaging, respectively. Interacts with human PSIP1; this interaction may inhibit HIV-1 DNA integration by promoting dissociation of the Integrase-LEDGF/p75 complex. Asymmetrically arginine dimethylated at one site by host PRMT6. Methylation impairs the RNA-binding activity and export of viral RNA from the nucleus to the cytoplasm. In terms of processing, phosphorylated by protein kinase CK2. Presence of, and maybe binding to the N-terminus of the regulatory beta subunit of CK2 is necessary for CK2-mediated Rev's phosphorylation.

The protein resides in the host nucleus. It localises to the host nucleolus. The protein localises to the host cytoplasm. Functionally, escorts unspliced or incompletely spliced viral pre-mRNAs (late transcripts) out of the nucleus of infected cells. These pre-mRNAs carry a recognition sequence called Rev responsive element (RRE) located in the env gene, that is not present in fully spliced viral mRNAs (early transcripts). This function is essential since most viral proteins are translated from unspliced or partially spliced pre-mRNAs which cannot exit the nucleus by the pathway used by fully processed cellular mRNAs. Rev itself is translated from a fully spliced mRNA that readily exits the nucleus. Rev's nuclear localization signal (NLS) binds directly to KPNB1/Importin beta-1 without previous binding to KPNA1/Importin alpha-1. KPNB1 binds to the GDP bound form of RAN (Ran-GDP) and targets Rev to the nucleus. In the nucleus, the conversion from Ran-GDP to Ran-GTP dissociates Rev from KPNB1 and allows Rev's binding to the RRE in viral pre-mRNAs. Rev multimerization on the RRE via cooperative assembly exposes its nuclear export signal (NES) to the surface. Rev can then form a complex with XPO1/CRM1 and Ran-GTP, leading to nuclear export of the complex. Conversion from Ran-GTP to Ran-GDP mediates dissociation of the Rev/RRE/XPO1/RAN complex, so that Rev can return to the nucleus for a subsequent round of export. Beside KPNB1, also seems to interact with TNPO1/Transportin-1, RANBP5/IPO5 and IPO7/RANBP7 for nuclear import. The nucleoporin-like HRB/RIP is an essential cofactor that probably indirectly interacts with Rev to release HIV RNAs from the perinuclear region to the cytoplasm. The chain is Protein Rev from Homo sapiens (Human).